A 516-amino-acid polypeptide reads, in one-letter code: Cytochrome P450 93G1 (516 aa).

Residues 11–31 (LLGMGTTMGALALALVVVVVV) form a helical membrane-spanning segment. Cys-454 is a binding site for heme.

This sequence belongs to the cytochrome P450 family. Heme serves as cofactor.

The protein resides in the membrane. The enzyme catalyses a flavanone + reduced [NADPH--hemoprotein reductase] + O2 = a flavone + oxidized [NADPH--hemoprotein reductase] + 2 H2O + H(+). Its pathway is secondary metabolite biosynthesis; flavonoid biosynthesis. Functionally, functions as a flavone synthase II (FNSII) that catalyzes the direct conversion of flavanones to flavones. In vitro, can convert naringenin and eriodictyol to apigenin and luteolin, respectively. Acts as a key branch point enzyme that channels flavanones to the biosynthesis of soluble tricin O-linked conjugates. This Oryza sativa subsp. japonica (Rice) protein is Cytochrome P450 93G1.